The primary structure comprises 286 residues: Homoserine kinase (286 aa).

An ATP-binding site is contributed by 78–88 (PLARGLGSSSS).

Belongs to the GHMP kinase family. Homoserine kinase subfamily.

The protein localises to the cytoplasm. The catalysed reaction is L-homoserine + ATP = O-phospho-L-homoserine + ADP + H(+). It functions in the pathway amino-acid biosynthesis; L-threonine biosynthesis; L-threonine from L-aspartate: step 4/5. Its function is as follows. Catalyzes the ATP-dependent phosphorylation of L-homoserine to L-homoserine phosphate. This chain is Homoserine kinase, found in Streptococcus thermophilus (strain CNRZ 1066).